Reading from the N-terminus, the 613-residue chain is MEQNPQSQLKLLVTRGKEQGYLTYAEVNDHLPEDIVDSDQIEDIIQMINDMGIQVMEEAPDADDLMLAENTADEDAAEAAAQVLSSVESEIGRTTDPVRMYMREMGTVELLTREGEIDIAKRIEDGINQVQCSVAEYPEAITYLLEQYDRVEAEEARLSDLITGFVDPNAEEDLAPTATHVGSELSQEDLDDDEDEDEEDGDDDSADDDNSIDPELAREKFAELRAQYVVTRDTIKAKGRSHATAQEEILKLSEVFKQFRLVPKQFDYLVNSMRVMMDRVRTQERLIMKLCVEQCKMPKKNFITLFTGNETSDTWFNAAIAMNKPWSEKLHDVSEEVHRALQKLQQIEEETGLTIEQVKDINRRMSIGEAKARRAKKEMVEANLRLVISIAKKYTNRGLQFLDLIQEGNIGLMKAVDKFEYRRGYKFSTYATWWIRQAITRSIADQARTIRIPVHMIETINKLNRISRQMLQEMGREPTPEELAERMLMPEDKIRKVLKIAKEPISMETPIGDDEDSHLGDFIEDTTLELPLDSATTESLRAATHDVLAGLTAREAKVLRMRFGIDMNTDYTLEEVGKQFDVTRERIRQIEAKALRKLRHPSRSEVLRSFLDD.

The interval 2-80 (EQNPQSQLKL…TADEDAAEAA (79 aa)) is sigma-70 factor domain-1. A disordered region spans residues 176–213 (PTATHVGSELSQEDLDDDEDEDEEDGDDDSADDDNSID). A compositionally biased stretch (acidic residues) spans 186–212 (SQEDLDDDEDEDEEDGDDDSADDDNSI). The tract at residues 379-449 (MVEANLRLVI…TRSIADQART (71 aa)) is sigma-70 factor domain-2. Positions 403–406 (DLIQ) match the Interaction with polymerase core subunit RpoC motif. Positions 458 to 534 (ETINKLNRIS…DTTLELPLDS (77 aa)) are sigma-70 factor domain-3. A sigma-70 factor domain-4 region spans residues 547–600 (VLAGLTAREAKVLRMRFGIDMNTDYTLEEVGKQFDVTRERIRQIEAKALRKLRH). The H-T-H motif DNA-binding region spans 573–592 (LEEVGKQFDVTRERIRQIEA). Positions 584 to 599 (RERIRQIEAKALRKLR) are interaction with anti-sigma factors.

Belongs to the sigma-70 factor family. RpoD/SigA subfamily. In terms of assembly, interacts transiently with the RNA polymerase catalytic core formed by RpoA, RpoB, RpoC and RpoZ (2 alpha, 1 beta, 1 beta' and 1 omega subunit) to form the RNA polymerase holoenzyme that can initiate transcription. Identified in a complex containing RpoD, the RNA polymerase subunits RpoA, RpoB and RpoZ, CRP and DNA. Interacts with Rsd; this prevents interaction with the RNA polymerase catalytic core and with promoter DNA, and as a consequence, promotes transcription from promoters that require alternative sigma factors. Interacts with phage T4 AsiA; this interferes with binding to DNA and to the RNA polymerase. As to quaternary structure, (Microbial infection) Interacts with Escherichia phage lambda antitermination protein Q.

The protein localises to the cytoplasm. Sigma factors are initiation factors that promote the attachment of RNA polymerase to specific initiation sites and are then released. This sigma factor is the primary sigma factor during exponential growth. Preferentially transcribes genes associated with fast growth, such as ribosomal operons, other protein-synthesis related genes, rRNA- and tRNA-encoding genes and prfB. In Escherichia coli (strain K12), this protein is RNA polymerase sigma factor RpoD.